Consider the following 173-residue polypeptide: Crossover junction endodeoxyribonuclease RuvC (173 aa).

Residues Asp-8, Glu-67, and Asp-139 contribute to the active site. Mg(2+)-binding residues include Asp-8, Glu-67, and Asp-139.

The protein belongs to the RuvC family. Homodimer which binds Holliday junction (HJ) DNA. The HJ becomes 2-fold symmetrical on binding to RuvC with unstacked arms; it has a different conformation from HJ DNA in complex with RuvA. In the full resolvosome a probable DNA-RuvA(4)-RuvB(12)-RuvC(2) complex forms which resolves the HJ. Mg(2+) serves as cofactor.

It is found in the cytoplasm. It catalyses the reaction Endonucleolytic cleavage at a junction such as a reciprocal single-stranded crossover between two homologous DNA duplexes (Holliday junction).. The RuvA-RuvB-RuvC complex processes Holliday junction (HJ) DNA during genetic recombination and DNA repair. Endonuclease that resolves HJ intermediates. Cleaves cruciform DNA by making single-stranded nicks across the HJ at symmetrical positions within the homologous arms, yielding a 5'-phosphate and a 3'-hydroxyl group; requires a central core of homology in the junction. The consensus cleavage sequence is 5'-(A/T)TT(C/G)-3'. Cleavage occurs on the 3'-side of the TT dinucleotide at the point of strand exchange. HJ branch migration catalyzed by RuvA-RuvB allows RuvC to scan DNA until it finds its consensus sequence, where it cleaves and resolves the cruciform DNA. This is Crossover junction endodeoxyribonuclease RuvC from Shewanella amazonensis (strain ATCC BAA-1098 / SB2B).